Reading from the N-terminus, the 406-residue chain is Cysteine desulfurase (406 aa).

N6-(pyridoxal phosphate)lysine is present on K226. The active-site Cysteine persulfide intermediate is the C364.

The protein belongs to the class-V pyridoxal-phosphate-dependent aminotransferase family. Csd subfamily. As to quaternary structure, homodimer. Interacts with SufE and the SufBCD complex composed of SufB, SufC and SufD. The interaction with SufE is required to mediate the direct transfer of the sulfur atom from the S-sulfanylcysteine. Pyridoxal 5'-phosphate serves as cofactor.

Its subcellular location is the cytoplasm. The catalysed reaction is (sulfur carrier)-H + L-cysteine = (sulfur carrier)-SH + L-alanine. It carries out the reaction L-selenocysteine + AH2 = hydrogenselenide + L-alanine + A + H(+). It functions in the pathway cofactor biosynthesis; iron-sulfur cluster biosynthesis. In terms of biological role, cysteine desulfurases mobilize the sulfur from L-cysteine to yield L-alanine, an essential step in sulfur metabolism for biosynthesis of a variety of sulfur-containing biomolecules. Component of the suf operon, which is activated and required under specific conditions such as oxidative stress and iron limitation. Acts as a potent selenocysteine lyase in vitro, that mobilizes selenium from L-selenocysteine. Selenocysteine lyase activity is however unsure in vivo. The sequence is that of Cysteine desulfurase from Escherichia fergusonii (strain ATCC 35469 / DSM 13698 / CCUG 18766 / IAM 14443 / JCM 21226 / LMG 7866 / NBRC 102419 / NCTC 12128 / CDC 0568-73).